A 316-amino-acid polypeptide reads, in one-letter code: Protein PXR1 (316 aa).

A G-patch domain is found at 25 to 71 (TSRFGHQYLERMGWKPGKGLGLVEHATTSHVKVSIKDDNLGLGSKLA). Residues 146–280 (GTTKKRKIDS…DSMLMPKEQL (135 aa)) form a disordered region. Residues 179–195 (DRKEKEEKKTEKENSEI) show a composition bias toward basic and acidic residues. The span at 196-209 (KKKKKEKKEKKEKK) shows a compositional bias: basic residues. The segment covering 210 to 240 (EKKDKNEKKEKKDKNEKKEKKDKNEEKEKKE) has biased composition (basic and acidic residues). Basic residues predominate over residues 241 to 260 (KKEKKEKKDKKDKKDKKDKK). Over residues 261–270 (EKKEVKEVTR) the composition is skewed to basic and acidic residues.

This sequence belongs to the PINX1 family.

The protein localises to the nucleus. It localises to the nucleolus. Functionally, involved in rRNA-processing at A0, A1 and A2 sites and negatively regulates telomerase. The chain is Protein PXR1 (PXR1) from Debaryomyces hansenii (strain ATCC 36239 / CBS 767 / BCRC 21394 / JCM 1990 / NBRC 0083 / IGC 2968) (Yeast).